The chain runs to 685 residues: Eukaryotic peptide chain release factor GTP-binding subunit (685 aa).

Disordered regions lie at residues 1-34 (MSDSNQGNNQQNYQQYSQNGNQQQGNNRYQGYQA), 63-99 (YNPDAGYQQQYNPQGGYQQYNPQGGYQQQFNPQGGRG), and 112-234 (GYQA…NVTS). At Ser2 the chain carries N-acetylserine. Positions 2 to 239 (SDSNQGNNQQ…ANVTSADALI (238 aa)) are interaction with PAB1. A prion domain (PrD) region spans residues 5 to 135 (NQGNNQQNYQ…LNDFQKQQKQ (131 aa)). Positions 117 to 129 (FQPQSQGMSLNDF) are enriched in polar residues. Residues 139-249 (KPKKTLKLVS…KEQEEEVDDE (111 aa)) are charged. Residues 166–222 (AESDKKEEEKSAETKEPTKEPTKVEEPVKKEEKPVQTEEKTEEKSELPKVEDLKISE) are compositionally biased toward basic and acidic residues. Polar residues predominate over residues 223–234 (STHNTNNANVTS). A tr-type G domain is found at 258–484 (KDHVSLIFMG…YLDTMNHVDR (227 aa)). Residues 267-274 (GHVDAGKS) are G1. A GTP-binding site is contributed by 267–274 (GHVDAGKS). The segment at 323–327 (GKTIE) is G2. Residues 344-347 (DAPG) form a G3 region. Residues 406–409 (NKMD) and 449–450 (GY) each bind GTP. The G4 stretch occupies residues 406 to 409 (NKMD). Residues 448-450 (SGY) form a G5 region. Ser571 is subject to Phosphoserine.

It belongs to the TRAFAC class translation factor GTPase superfamily. Classic translation factor GTPase family. ERF3 subfamily. Heterodimer of two subunits, one of which binds GTP. Interacts with polyadenylate-binding protein PAB1, and TPA1.

Its subcellular location is the cytoplasm. The enzyme catalyses GTP + H2O = GDP + phosphate + H(+). Its function is as follows. GTPase component of the eRF1-eRF3-GTP ternary complex, a ternary complex that mediates translation termination in response to the termination codons UAA, UAG and UGA. SUP35/eRF3 mediates SUP45/eRF1 delivery to stop codons: The eRF1-eRF3-GTP complex binds to a stop codon in the ribosomal A-site. GTP hydrolysis by SUP35/eRF3 induces a conformational change that leads to its dissociation, permitting SUP45/eRF1 to accommodate fully in the A-site. Recruited by polyadenylate-binding protein PAB1 to poly(A)-tails of mRNAs. Interaction with PAB1 is also required for regulation of normal mRNA decay through translation termination-coupled poly(A) shortening. This Saccharomyces cerevisiae (strain ATCC 204508 / S288c) (Baker's yeast) protein is Eukaryotic peptide chain release factor GTP-binding subunit (SUP35).